The chain runs to 75 residues: MTFDEVCGLFKQFDGLEQKFLLLSDGSYISVDDFKQRFEGDFNEYEPLSSLQSSPSSTPAWEGIWNKLQEDGLFE.

This is SPbeta prophage-derived uncharacterized protein YomT (yomT) from Bacillus subtilis (strain 168).